An 802-amino-acid polypeptide reads, in one-letter code: Leucine--tRNA ligase (802 aa).

A 'HIGH' region motif is present at residues 40–51 (PYPSGAGLHVGH). The 'KMSKS' region motif lies at 576–580 (KMSKS). An ATP-binding site is contributed by Lys-579.

The protein belongs to the class-I aminoacyl-tRNA synthetase family.

The protein resides in the cytoplasm. It catalyses the reaction tRNA(Leu) + L-leucine + ATP = L-leucyl-tRNA(Leu) + AMP + diphosphate. This is Leucine--tRNA ligase from Bacillus cereus (strain G9842).